We begin with the raw amino-acid sequence, 562 residues long: Phosphomethylpyrimidine synthase (562 aa).

Substrate-binding positions include N179, M208, Y237, H273, 293–295, 334–337, and E373; these read SRG and DGLR. A Zn(2+)-binding site is contributed by H377. Residue Y400 coordinates substrate. H441 lines the Zn(2+) pocket. [4Fe-4S] cluster contacts are provided by C521, C524, and C529.

This sequence belongs to the ThiC family. The cofactor is [4Fe-4S] cluster.

The enzyme catalyses 5-amino-1-(5-phospho-beta-D-ribosyl)imidazole + S-adenosyl-L-methionine = 4-amino-2-methyl-5-(phosphooxymethyl)pyrimidine + CO + 5'-deoxyadenosine + formate + L-methionine + 3 H(+). It functions in the pathway cofactor biosynthesis; thiamine diphosphate biosynthesis. In terms of biological role, catalyzes the synthesis of the hydroxymethylpyrimidine phosphate (HMP-P) moiety of thiamine from aminoimidazole ribotide (AIR) in a radical S-adenosyl-L-methionine (SAM)-dependent reaction. The sequence is that of Phosphomethylpyrimidine synthase from Geobacillus kaustophilus (strain HTA426).